The sequence spans 339 residues: MLQFILRRLGLVIPTFIGITLLTFAFVHMIPGDPVMIMAGERGISPERHAQLLAELGLDKPMWQQYLHYIWGVMHGDLGISMKSRIPVWEEFVPRFQATLELGVCAMIFATAVGIPVGVLAAVKRGSIFDHTAVGLALTGYSMPIFWWGMMLIMLVSVHWNLTPVSGRVSDMVFLDDSNPLTGFMLIDTAIWGEDGNFIDAVAHMILPAIVLGTIPLAVIVRMTRSSMLEVLGEDYIRTARAKGLTRMRVIIVHALRNAMLPVVTVIGLQVGTLLAGAILTETIFSWPGLGRWLIDALQRRDYPVVQGGVLLVATMIILVNLLVDLLYGVVNPRIRHKK.

Residues 1–9 lie on the Periplasmic side of the membrane; the sequence is MLQFILRRL. The helical transmembrane segment at 10–30 threads the bilayer; that stretch reads GLVIPTFIGITLLTFAFVHMI. Over 31-102 the chain is Cytoplasmic; that stretch reads PGDPVMIMAG…VPRFQATLEL (72 aa). The 233-residue stretch at 96 to 328 folds into the ABC transmembrane type-1 domain; the sequence is FQATLELGVC…LVNLLVDLLY (233 aa). A helical transmembrane segment spans residues 103 to 123; that stretch reads GVCAMIFATAVGIPVGVLAAV. At 124-135 the chain is on the periplasmic side; it reads KRGSIFDHTAVG. A helical membrane pass occupies residues 136-156; sequence LALTGYSMPIFWWGMMLIMLV. Over 157 to 171 the chain is Cytoplasmic; it reads SVHWNLTPVSGRVSD. The helical transmembrane segment at 172–192 threads the bilayer; sequence MVFLDDSNPLTGFMLIDTAIW. Over 193 to 200 the chain is Periplasmic; the sequence is GEDGNFID. Residues 201–221 form a helical membrane-spanning segment; the sequence is AVAHMILPAIVLGTIPLAVIV. The Cytoplasmic segment spans residues 222–259; that stretch reads RMTRSSMLEVLGEDYIRTARAKGLTRMRVIIVHALRNA. Residues 260–280 traverse the membrane as a helical segment; it reads MLPVVTVIGLQVGTLLAGAIL. At 281-309 the chain is on the periplasmic side; that stretch reads TETIFSWPGLGRWLIDALQRRDYPVVQGG. The chain crosses the membrane as a helical span at residues 310–330; the sequence is VLLVATMIILVNLLVDLLYGV. The Cytoplasmic segment spans residues 331-339; sequence VNPRIRHKK.

It belongs to the binding-protein-dependent transport system permease family. OppBC subfamily. In terms of assembly, the complex is composed of two ATP-binding proteins (DppD and DppF), two transmembrane proteins (DppB and DppC) and a solute-binding protein (DppA).

Its subcellular location is the cell inner membrane. In terms of biological role, part of the ABC transporter DppABCDF involved in dipeptide transport. Responsible for the translocation of the substrate across the membrane. This is Dipeptide transport system permease protein DppB (dppB) from Escherichia coli O157:H7.